A 396-amino-acid polypeptide reads, in one-letter code: GDSL esterase/lipase ACHE (396 aa).

Residues 1–31 form the signal peptide; the sequence is MATAATATAGSRAAVLLLLSLALALALRPSD. Serine 49 (nucleophile) is an active-site residue. N-linked (GlcNAc...) asparagine glycans are attached at residues asparagine 108, asparagine 126, asparagine 151, asparagine 196, and asparagine 339. Active-site residues include aspartate 359 and histidine 362.

This sequence belongs to the 'GDSL' lipolytic enzyme family.

Its subcellular location is the secreted. Functionally, esterase that can hydrolyze acetylthiocholine and propionylthiocholine in vitro. Substrate preference is propionylthiocholine &gt; acetylthiocholine. Possesses extremely low activity against butyrylthiocholine. The polypeptide is GDSL esterase/lipase ACHE (Zea mays (Maize)).